The primary structure comprises 510 residues: MTTLSSINLSIPPHLLPSTTNTCSSSSATSCSPPRSSSFVLHSPLSFGHRRLPISKKSKLRFCGVITKEAVSGSNDMTITQVREDDESEIDAPLLDPESLSKPRRIALFVEPSPFAYVSGYKNRFQNFIRYLREMGDEVIVVTTHEGVPEEFYGARVIGSRSFPCPYYQKVPLSLALSPRIISEIARFKPDIIHASSPGVMVFGALAIAKMLSVPIVMSYHTHVPVYIPRYTFSWLVKPMWSIIRFLHRAADLTLVPSAAIGKDLIAAGATAANQLRLWNKGVDSESFNPRFRSQEMRIRLSNGEPEKPLVIHVGRIGVEKSLELLKSVMDKLPEARIAFIGDGPYKEDLEKLFTGMPAVFTGTLQGDELSQAYASGDVFVMPSESETLGLVVLEAMSSGLPVVAARAGGIPDIIPEDQEGKTGFLFNPGDVEDCVTKLRTLLHDRETREIIGKAAREETEKYDWRAATTKIRNEQYSAAIWFWRKKKVHVLGPINWLIKRLFPVPEGNV.

Residues 1 to 83 (MTTLSSINLS…SNDMTITQVR (83 aa)) constitute a chloroplast transit peptide. Serine 88 is modified (phosphoserine). Residues 198-218 (PGVMVFGALAIAKMLSVPIVM) traverse the membrane as a helical segment.

The protein belongs to the glycosyltransferase group 1 family. Glycosyltransferase 4 subfamily.

It localises to the plastid. The protein resides in the chloroplast membrane. The catalysed reaction is UDP-alpha-D-6-sulfoquinovose + a 1,2-diacyl-sn-glycerol = a 6-sulfo-alpha-D-quinovosyldiacylglycerol + UDP + H(+). It functions in the pathway glycolipid biosynthesis. In terms of biological role, catalyzes the transfer of the sulfoquinovose moiety from UDP-sulfoquinovose to diacylglycerol during sulfolipid biosynthesis. Sulfolipid contributes to maintaining a negatively charged lipid-water interface, a requirement for proper function of photosynthetic membranes. Sulfolipid may also function as a substitute of anionic phospholipids under phosphate-limited growth conditions. This Arabidopsis thaliana (Mouse-ear cress) protein is Sulfoquinovosyl transferase SQD2.